We begin with the raw amino-acid sequence, 452 residues long: MQRRIMGIETEFGVTCTFHGHRRLSPDEVARYLFRRVVSWGRSSNVFLRNGARLYLDVGSHPEYATAECDSLIQLVNHDRAGERVLEELLIDAEARLAEEGIGGDIYLFKNNTDSAGNSYGCHENFLVARAGEFSRISDVLLPFLVTRQLICGAGKVLQTPKAATFCLSQRAEHIWEGVSSATTRSRPIINTRDEPHADAEKYRRLHVIVGDSNMAETTTMLKVGSAALVLEMIEAGVSFRDFALDNPIRAIREVSHDVTGKKPVRLAGGRQASALDIQREYHAKAVEHLRNREPDPQVEQVVDLWGRTLDAVEAQDFAKVDTEIDWVIKRKLFQRYQDRHGFDLSDPKIAQLDLAYHDIKRGRGVFDVLQRKGLVKRVTEDETIDDAVENPPQTTRAKLRGDFITAAQAAGRDFTVDWVHLKLNDQAQRTVLCKDPFRSVDERVERLIASM.

Glutamate 9 contributes to the Mg(2+) binding site. Arginine 53 lines the ATP pocket. Mg(2+) is bound at residue tyrosine 55. Aspartate 57 (proton acceptor) is an active-site residue. Glutamate 63 is a Mg(2+) binding site. ATP is bound by residues threonine 66 and tryptophan 419.

This sequence belongs to the Pup ligase/Pup deamidase family. Pup-conjugating enzyme subfamily.

The catalysed reaction is ATP + [prokaryotic ubiquitin-like protein]-L-glutamate + [protein]-L-lysine = ADP + phosphate + N(6)-([prokaryotic ubiquitin-like protein]-gamma-L-glutamyl)-[protein]-L-lysine.. The protein operates within protein degradation; proteasomal Pup-dependent pathway. It functions in the pathway protein modification; protein pupylation. Its function is as follows. Catalyzes the covalent attachment of the prokaryotic ubiquitin-like protein modifier Pup to the proteasomal substrate proteins, thereby targeting them for proteasomal degradation. This tagging system is termed pupylation. The ligation reaction involves the side-chain carboxylate of the C-terminal glutamate of Pup and the side-chain amino group of a substrate lysine. This is Pup--protein ligase from Rhodococcus erythropolis (strain PR4 / NBRC 100887).